The chain runs to 466 residues: Adenosylhomocysteinase (466 aa).

Substrate contacts are provided by Thr-57, Asp-132, and Glu-192. Residue 193–195 (TTT) participates in NAD(+) binding. Substrate is bound by residues Lys-222 and Asp-226. Residues Asn-227, 256-261 (GYGDVG), Glu-279, Asn-314, 335-337 (IGH), and Asn-380 each bind NAD(+).

This sequence belongs to the adenosylhomocysteinase family. Requires NAD(+) as cofactor.

The protein localises to the cytoplasm. The catalysed reaction is S-adenosyl-L-homocysteine + H2O = L-homocysteine + adenosine. It participates in amino-acid biosynthesis; L-homocysteine biosynthesis; L-homocysteine from S-adenosyl-L-homocysteine: step 1/1. Functionally, may play a key role in the regulation of the intracellular concentration of adenosylhomocysteine. The polypeptide is Adenosylhomocysteinase (Brucella melitensis biotype 2 (strain ATCC 23457)).